Reading from the N-terminus, the 192-residue chain is Interleukin-18 (192 aa).

The propeptide occupies Met1–Asp35.

This sequence belongs to the IL-1 family. In terms of assembly, forms a ternary complex with ligand-binding receptor subunit IL18R1 and signaling receptor subunit IL18RAP at the plasma membrane. Mature IL18 first binds to IL18R1 forming a low affinity binary complex, which then interacts with IL18RAP to form a high affinity ternary complex that signals inside the cell. Interacts with cargo receptor TMED10; the interaction mediates the translocation from the cytoplasm into the ERGIC (endoplasmic reticulum-Golgi intermediate compartment) and thereby secretion. In terms of processing, the pro-IL-18 precursor is processed by CASP1, CASP4 or CASP5 to yield its mature, active form. The pro-IL-18 precursor features autoinhibitory interactions between the propeptide and the post-cleavage-site region, preventing recognition by the IL18R1 receptor. Processing by CASP1, CASP4 or CASP5 induces conformational changes to generate critical receptor-binding sites. The mature form is then secreted and released in the extracellular milieu by passing through the gasdermin-D (GSDMD) pore. In contrast, cleavage by CASP3 inactivates IL18.

It is found in the cytoplasm. The protein resides in the cytosol. Its subcellular location is the secreted. In terms of biological role, pro-inflammatory cytokine primarily involved in epithelial barrier repair, polarized T-helper 1 (Th1) cell and natural killer (NK) cell immune responses. Upon binding to IL18R1 and IL18RAP, forms a signaling ternary complex which activates NF-kappa-B, triggering synthesis of inflammatory mediators. Synergizes with IL12/interleukin-12 to induce IFNG synthesis from T-helper 1 (Th1) cells and natural killer (NK) cells. Involved in transduction of inflammation downstream of pyroptosis: its mature form is specifically released in the extracellular milieu by passing through the gasdermin-D (GSDMD) pore. This chain is Interleukin-18 (IL18), found in Sus scrofa (Pig).